We begin with the raw amino-acid sequence, 287 residues long: ATP synthase gamma chain (287 aa).

Belongs to the ATPase gamma chain family. In terms of assembly, F-type ATPases have 2 components, CF(1) - the catalytic core - and CF(0) - the membrane proton channel. CF(1) has five subunits: alpha(3), beta(3), gamma(1), delta(1), epsilon(1). CF(0) has three main subunits: a, b and c.

It localises to the cell inner membrane. Produces ATP from ADP in the presence of a proton gradient across the membrane. The gamma chain is believed to be important in regulating ATPase activity and the flow of protons through the CF(0) complex. The chain is ATP synthase gamma chain from Salmonella gallinarum (strain 287/91 / NCTC 13346).